The primary structure comprises 607 residues: Monocarboxylate transporter 7 (607 aa).

The segment at 1 to 84 is disordered; that stretch reads MRASGQGPQR…PAETGCSRSR (84 aa). Residues 1 to 105 lie on the Cytoplasmic side of the membrane; the sequence is MRASGQGPQR…ANVYTQVPDG (105 aa). Residues 106–126 traverse the membrane as a helical segment; it reads GWGWAVAVSFFFVEVFTYGII. Residues 127 to 146 are Extracellular-facing; that stretch reads KSFGVFFNDLMDSFDESNSK. A helical transmembrane segment spans residues 147 to 167; the sequence is ISWIISICVFVLTFTAPLSTV. At 168 to 175 the chain is on the cytoplasmic side; that stretch reads LSNRFGHR. A helical membrane pass occupies residues 176–196; that stretch reads LVVMAGGLLISLGMITASFSQ. The Extracellular segment spans residues 197 to 202; the sequence is RVYHMY. Residues 203 to 223 form a helical membrane-spanning segment; sequence ISIGVISGLGYCFSFLPTVTI. At 224–233 the chain is on the cytoplasmic side; the sequence is LSQYFDKRRS. Residues 234–254 traverse the membrane as a helical segment; sequence VVTAVASTGECFAVFAFAPAI. The Extracellular segment spans residues 255–268; that stretch reads TALKEHIGWRYSLL. Residues 269-289 traverse the membrane as a helical segment; that stretch reads FVGLLQLNIMVCGALLRPIII. Topologically, residues 290 to 383 are cytoplasmic; that stretch reads QGPGQSPKAV…KEKSFICYAL (94 aa). 4 positions are modified to phosphoserine: S319, S322, S325, and S332. A helical membrane pass occupies residues 384–404; the sequence is FGLFATLGFFAPSLYIIPLGI. The Extracellular portion of the chain corresponds to 405 to 414; the sequence is SLGIDPDRAA. A helical transmembrane segment spans residues 415–435; that stretch reads FLLSTMAIAEVFGRIGAGFVL. Topologically, residues 436–442 are cytoplasmic; it reads NREPIRK. A helical membrane pass occupies residues 443-463; it reads IYIELICVILLTASLFAFTFA. The Extracellular segment spans residues 464–465; the sequence is TE. The helical transmembrane segment at 466 to 486 threads the bilayer; that stretch reads FWGLMLCSVFFGSMVGTIGGT. At 487 to 507 the chain is on the cytoplasmic side; the sequence is HIPMLAEDDVVGIEKMSSAAG. Residues 508 to 528 form a helical membrane-spanning segment; sequence VYVFIQSISGLAGPPLAGLLV. Residues 529 to 536 are Extracellular-facing; the sequence is DQSKIYSR. The helical transmembrane segment at 537-557 threads the bilayer; it reads AFYSCAAGMCLAAVCLALVRP. The Cytoplasmic segment spans residues 558 to 607; that stretch reads CKKGLCQNSHSGENQTDRQRGKALQDIPEDFLEMDLGKCEHRAHMKMDPV.

It belongs to the major facilitator superfamily. Monocarboxylate porter (TC 2.A.1.13) family. In terms of assembly, forms functional complexes with BSG/CD147 or EMB/GP70 ancillary proteins.

It localises to the basolateral cell membrane. The catalysed reaction is taurine(out) = taurine(in). In terms of biological role, monocarboxylate transporter selective for taurine. May associate with BSG/CD147 or EMB/GP70 ancillary proteins to mediate facilitative efflux or influx of taurine across the plasma membrane. The transport is pH- and sodium-independent. Rather low-affinity, is likely effective for taurine transport in tissues where taurine is present at high concentrations. In Mus musculus (Mouse), this protein is Monocarboxylate transporter 7.